The sequence spans 364 residues: N-acetyl-gamma-glutamyl-phosphate reductase (364 aa).

Cysteine 157 is a catalytic residue.

This sequence belongs to the NAGSA dehydrogenase family. Type 1 subfamily.

The protein resides in the cytoplasm. The catalysed reaction is N-acetyl-L-glutamate 5-semialdehyde + phosphate + NADP(+) = N-acetyl-L-glutamyl 5-phosphate + NADPH + H(+). The protein operates within amino-acid biosynthesis; L-arginine biosynthesis; N(2)-acetyl-L-ornithine from L-glutamate: step 3/4. Catalyzes the NADPH-dependent reduction of N-acetyl-5-glutamyl phosphate to yield N-acetyl-L-glutamate 5-semialdehyde. This Bifidobacterium longum (strain DJO10A) protein is N-acetyl-gamma-glutamyl-phosphate reductase.